The sequence spans 463 residues: Probable transport protein HsrA (463 aa).

A run of 14 helical transmembrane segments spans residues 10–30, 49–69, 82–102, 107–127, 139–159, 165–185, 197–217, 225–245, 267–287, 298–318, 328–348, 354–374, 393–413, and 429–449; these read GLAW…TILN, MAII…AWAA, VFTF…ESLI, IQGI…IQAV, MATA…WLVI, WIFL…GSVM, WTGF…LDLL, SVTY…CGYA, IIAN…LPLM, MSGW…ILIG, TTLI…AWLD, TWII…FTSI, VLSI…SIIL, and AFSY…WSLM.

It belongs to the major facilitator superfamily. EmrB family.

It localises to the cell inner membrane. This Haemophilus influenzae (strain ATCC 51907 / DSM 11121 / KW20 / Rd) protein is Probable transport protein HsrA (hsrA).